Reading from the N-terminus, the 367-residue chain is MSGSQTLVVKLGTSVLTGGSRRLNRAHIVELVRQCAQQHAAGHRIVIVTSGAIAAGREHLGYPELPATIATKQLLAAVGQSRLIQLWEQLFSIYGIHVGQMLLTRADMEDRERFLNARDTMRALLDNNIVPVINENDAVATAEIKVGDNDNLSALAAILADADKLLLLTDQAGLFTADPRNNPDAELIREVNGINDALRSIAGDSVSGLGTGGMSTKLQAADVACRAGIDVVIAAGSKPGVIGDVIADISVGTRFHAVDAPLESRKHWIFGAPPAGEITVDDGALSAILERGSSLLPKGIRRVEGNFSRGEVIRVRSLAGRDVAHAVTRYNSDALRMIAGHHSQQIAEILGYEYGPVAIHRDDMIIN.

An ATP-binding site is contributed by Lys10. Residues Ser50, Asp137, and Asn149 each coordinate substrate. ATP contacts are provided by residues 169-170 (TD) and 211-217 (TGGMSTK). Residues 275 to 353 (AGEITVDDGA…QQIAEILGYE (79 aa)) enclose the PUA domain.

This sequence belongs to the glutamate 5-kinase family.

It is found in the cytoplasm. The catalysed reaction is L-glutamate + ATP = L-glutamyl 5-phosphate + ADP. It participates in amino-acid biosynthesis; L-proline biosynthesis; L-glutamate 5-semialdehyde from L-glutamate: step 1/2. In terms of biological role, catalyzes the transfer of a phosphate group to glutamate to form L-glutamate 5-phosphate. This Pectobacterium carotovorum subsp. carotovorum (strain PC1) protein is Glutamate 5-kinase.